Here is a 1170-residue protein sequence, read N- to C-terminus: RNA-binding protein 33 (1170 aa).

2 disordered regions span residues 1–152 (MAAA…EGHE) and 199–221 (KDIKEESDEEEEDDEESGRLRFK). Ala-2 is modified (N-acetylalanine). A compositionally biased stretch (basic and acidic residues) spans 20–36 (QFDKPGAERSWRRRAAD). Residues 37–49 (EDWDSELEDDLLG) show a composition bias toward acidic residues. Ser-41 is modified (phosphoserine). Over residues 82–108 (FSSQGVTISLNATSGMVTSFELSDNTN) the composition is skewed to polar residues. 2 stretches are compositionally biased toward acidic residues: residues 112-126 (GEQESEYEQEQGEDE) and 203-214 (EESDEEEEDDEE). Ser-205 and Ser-233 each carry phosphoserine. 4 disordered regions span residues 259 to 708 (FEER…NSNL), 721 to 784 (MSSS…PDED), 833 to 863 (QLYAPPPPAEQEEQALSPSPTNGNPLLPFPG), and 942 to 1050 (AVPQ…VPPG). Residues 267-278 (KQGRYSSRRGGR) show a composition bias toward basic residues. Basic and acidic residues predominate over residues 289-306 (GDQRRESTERGRMKDHRP). A compositionally biased stretch (pro residues) spans 311-329 (TQPPVVPQAPPPPPPPPQQ). Composition is skewed to low complexity over residues 335–348 (LFQPQPLQPLLPVQ), 357–372 (QGMHMPPQLETPRMMM), and 394–403 (TVVTPVQVPL). Residues 419–433 (FPGPPEFPQHTPGPV) show a composition bias toward pro residues. Asymmetric dimethylarginine is present on Arg-470. 3 stretches are compositionally biased toward pro residues: residues 481 to 490 (SPPPPPPPPT), 554 to 568 (FIPPRQPFLPGPGQP), and 582 to 630 (LHPP…PQHP). Residues 632–642 (QHQHHHHHHHL) show a composition bias toward basic residues. Composition is skewed to polar residues over residues 662-708 (QTAQ…NSNL) and 721-732 (MSSSRCSATPSA). Ser-741 and Ser-765 each carry phosphoserine. A coiled-coil region spans residues 789–835 (LYRLKIEEQKRLREEILKQKELRRQQQAGARKKELLERLAQQQQQLY). Ser-951 carries the post-translational modification Phosphoserine. Lys-960 participates in a covalent cross-link: Glycyl lysine isopeptide (Lys-Gly) (interchain with G-Cter in SUMO2). Residues Ser-973 and Ser-991 each carry the phosphoserine modification. Residue Arg-1028 is modified to Asymmetric dimethylarginine; alternate. Residue Arg-1028 is modified to Omega-N-methylarginine; alternate. One can recognise an RRM domain in the interval 1098-1170 (CVVSVEGLSS…SHINVALIVE (73 aa)).

Associates with the NXF1-NXT1 RNA export complex. Interacts with ALKBH5; facilitating ALKBH5 recruitment to m6A-containing transcripts. Interacts with SENP1; promoting ALKBH5 deSUMOylation and subsequent activation.

Its subcellular location is the nucleus. The protein resides in the cytoplasm. Its function is as follows. RNA reader protein, which recognizes and binds specific RNAs, thereby regulating RNA metabolic processes, such as mRNA export, mRNA stability and/or translation. Binds a subset of intronless RNAs containing GC-rich elements, such as NORAD, and promotes their nuclear export by recruiting target RNAs to components of the NXF1-NXT1 RNA export machinery. Specifically recognizes and binds N6-methyladenosine (m6A)-containing mRNAs, promoting their demethylation by ALKBH5. Acts as an molecular adapter, which (1) promotes ALKBH5 recruitment to m6A-containing transcripts and (2) activates ALKBH5 demethylase activity by recruiting SENP1, leading to ALKBH5 deSUMOylation and subsequent activation. This Homo sapiens (Human) protein is RNA-binding protein 33.